Here is a 325-residue protein sequence, read N- to C-terminus: VSG expression site-associated protein 117A (325 aa).

Residues 1–23 form the signal peptide; sequence MKVTIVELVVWLFSVNFFVVVAE. N72, N290, and N313 each carry an N-linked (GlcNAc...) asparagine glycan.

Its function is as follows. Not known but may be related to activation of the variant surface glycoprotein genes. This chain is VSG expression site-associated protein 117A, found in Trypanosoma brucei brucei.